Here is a 122-residue protein sequence, read N- to C-terminus: Large ribosomal subunit protein uL14 (122 aa).

The protein belongs to the universal ribosomal protein uL14 family. In terms of assembly, part of the 50S ribosomal subunit. Forms a cluster with proteins L3 and L19. In the 70S ribosome, L14 and L19 interact and together make contacts with the 16S rRNA in bridges B5 and B8.

Functionally, binds to 23S rRNA. Forms part of two intersubunit bridges in the 70S ribosome. In Chlamydia trachomatis serovar L2 (strain ATCC VR-902B / DSM 19102 / 434/Bu), this protein is Large ribosomal subunit protein uL14.